Here is a 208-residue protein sequence, read N- to C-terminus: Golgi apparatus membrane protein TVP23 homolog B (208 aa).

Position 1 is an N-acetylmethionine (methionine 1). Over residues 1-21 (MLQQDSNDDTEDVSLFDAEEE) the composition is skewed to acidic residues. Residues 1-27 (MLQQDSNDDTEDVSLFDAEEETTNRPK) form a disordered region. The next 4 membrane-spanning stretches (helical) occupy residues 34 to 53 (PVAS…VYLL), 54 to 72 (CELF…ILLL), 126 to 146 (IFWL…FSAL), and 152 to 172 (KWLA…YGYI).

This sequence belongs to the TVP23 family.

The protein localises to the membrane. This is Golgi apparatus membrane protein TVP23 homolog B (TVP23B) from Bos taurus (Bovine).